The chain runs to 477 residues: MIKPRTPPGIMELLPREQIAFQRMLDVIRRNYERFGFLPVETPVFELSDVLLTKSGGETERQVYFVQSTGALANAAAAADEGAESGGLPELALRFDLTVPLARYVAEHEHELSFPFRRYQMQRVYRGERAQRGRFREFYQCDIDVIGKDALSIRYDAEVLAVIHAVFAELGIGDFKVQLNNRKLLRGFFESLGVAEGELQLAVLREVDKIDKRGAEYVRDTLAGEGFGIAAAQVDKILAFVAVRSNGHADALAQLQALETSVGASVTLGEGIAELREVLELVKALGVPETAYCLNFSIARGLDYYTGTVYETTLTDHPQIGSICSGGRYENLASHYTKSKLPGVGISIGLTRLFWQLREAGLIAGIAESSVHAMVALMDESRLDDALDIARRLRIGGINTEVQMEPKKVGKQFQYAARAGIRFVVLAGDDELARGVVAVKDLVREQQFDVARDELASTLQVELEQAKAMLVSGIAAN.

It belongs to the class-II aminoacyl-tRNA synthetase family. As to quaternary structure, homodimer.

Its subcellular location is the cytoplasm. It catalyses the reaction tRNA(His) + L-histidine + ATP = L-histidyl-tRNA(His) + AMP + diphosphate + H(+). In Xanthomonas campestris pv. campestris (strain ATCC 33913 / DSM 3586 / NCPPB 528 / LMG 568 / P 25), this protein is Histidine--tRNA ligase (hisS).